A 255-amino-acid chain; its full sequence is tRNA (guanine-N(1)-)-methyltransferase (255 aa).

S-adenosyl-L-methionine is bound by residues glycine 113 and 133-138 (IGDYVL).

This sequence belongs to the RNA methyltransferase TrmD family. In terms of assembly, homodimer.

It localises to the cytoplasm. It catalyses the reaction guanosine(37) in tRNA + S-adenosyl-L-methionine = N(1)-methylguanosine(37) in tRNA + S-adenosyl-L-homocysteine + H(+). Specifically methylates guanosine-37 in various tRNAs. The sequence is that of tRNA (guanine-N(1)-)-methyltransferase from Chloroflexus aggregans (strain MD-66 / DSM 9485).